The primary structure comprises 438 residues: Putative F-box/FBD/LRR-repeat protein At5g44950 (438 aa).

Positions 3-49 constitute an F-box domain; sequence RDRISELPDGLLNHILMYLHIEESIRTSVLSSRWRKLWLKVPGLDVN. 2 LRR repeats span residues 246–275 and 286–310; these read LSSL…DLTK and ISSV…KIGQ. One can recognise an FBD domain in the interval 355–407; sequence PEQIDFTNLPRCLISTLEYVEIKQLTMREESGIKLVKYFLENSAVLKKLTLSF.

The chain is Putative F-box/FBD/LRR-repeat protein At5g44950 from Arabidopsis thaliana (Mouse-ear cress).